The chain runs to 1489 residues: Chromatin-remodeling ATPase INO80 (1489 aa).

Phosphoserine occurs at positions 65, 115, and 133. Disordered regions lie at residues Asn-137–Met-311 and Lys-393–Thr-452. Composition is skewed to acidic residues over residues Asp-140 to Ala-164 and Asp-214 to Pro-291. Residues Ser-301–Met-311 are compositionally biased toward low complexity. Residues Lys-393–Leu-402 show a composition bias toward basic and acidic residues. Residues Ile-476–Thr-601 enclose the DBINO domain. The residue at position 610 (Ser-610) is a Phosphoserine. A Helicase ATP-binding domain is found at Ala-718–Ser-890. Asp-731–Thr-738 contributes to the ATP binding site. Positions Asp-841–Gln-844 match the DEAQ box motif. A Helicase C-terminal domain is found at Lys-1303–Glu-1467. A disordered region spans residues Ile-1456–Ala-1489.

It belongs to the SNF2/RAD54 helicase family. As to quaternary structure, component of the chromatin-remodeling INO80 complex, at least composed of ARP4, ARP5, ARP8, RVB1, RVB2, TAF14, NHP10, IES1, IES3, IES4, IES6, ACT1, IES2, IES5 and INO80.

The protein resides in the nucleus. The catalysed reaction is ATP + H2O = ADP + phosphate + H(+). Its function is as follows. ATPase component of the INO80 complex which remodels chromatin by shifting nucleosomes and is involved in DNA repair. Its ability to induce transcription of some phosphate-responsive genes is modulated by inositol polyphosphates. The INO80 complex is involved in DNA repair by associating with 'Ser-129' phosphorylated H2A histones as a response to DNA damage. This chain is Chromatin-remodeling ATPase INO80 (INO80), found in Saccharomyces cerevisiae (strain ATCC 204508 / S288c) (Baker's yeast).